A 444-amino-acid chain; its full sequence is Tubulin beta-2 chain (444 aa).

8 residues coordinate GTP: glutamine 11, glutamate 69, serine 138, glycine 142, threonine 143, glycine 144, asparagine 204, and asparagine 226. Glutamate 69 is a Mg(2+) binding site. The interval 422–444 (YQQYQDATAEEDDYDDGEGSTGD) is disordered. Positions 429–444 (TAEEDDYDDGEGSTGD) are enriched in acidic residues.

This sequence belongs to the tubulin family. Dimer of alpha and beta chains. A typical microtubule is a hollow water-filled tube with an outer diameter of 25 nm and an inner diameter of 15 nM. Alpha-beta heterodimers associate head-to-tail to form protofilaments running lengthwise along the microtubule wall with the beta-tubulin subunit facing the microtubule plus end conferring a structural polarity. Microtubules usually have 13 protofilaments but different protofilament numbers can be found in some organisms and specialized cells. The cofactor is Mg(2+). In terms of tissue distribution, found in areas of rapidly dividing tissues.

The protein resides in the cytoplasm. The protein localises to the cytoskeleton. Its function is as follows. Tubulin is the major constituent of microtubules, a cylinder consisting of laterally associated linear protofilaments composed of alpha- and beta-tubulin heterodimers. Microtubules grow by the addition of GTP-tubulin dimers to the microtubule end, where a stabilizing cap forms. Below the cap, tubulin dimers are in GDP-bound state, owing to GTPase activity of alpha-tubulin. This Daucus carota (Wild carrot) protein is Tubulin beta-2 chain (TUBB2).